The sequence spans 413 residues: RING-H2 finger protein ATL54 (413 aa).

A helical transmembrane segment spans residues 83–103; it reads ISIITITGAVLAILLTGFFLV. Residues 177 to 219 form an RING-type; atypical zinc finger; the sequence is CPVCLNEFEEDESLRLLPKCNHAFHISCIDTWLSSHTNCPLCR. Disordered stretches follow at residues 238 to 258 and 321 to 413; these read VTPGGSGSHLENDGVDEEDHG and THVE…VFPL. The segment covering 387–401 has biased composition (low complexity); the sequence is SSSTLKTNGSSSSVS. Polar residues predominate over residues 402-413; it reads CFNKNKSSVFPL.

This sequence belongs to the RING-type zinc finger family. ATL subfamily.

The protein resides in the membrane. The enzyme catalyses S-ubiquitinyl-[E2 ubiquitin-conjugating enzyme]-L-cysteine + [acceptor protein]-L-lysine = [E2 ubiquitin-conjugating enzyme]-L-cysteine + N(6)-ubiquitinyl-[acceptor protein]-L-lysine.. The protein operates within protein modification; protein ubiquitination. This is RING-H2 finger protein ATL54 (ATL54) from Arabidopsis thaliana (Mouse-ear cress).